Reading from the N-terminus, the 154-residue chain is OCIA domain-containing protein 2 (154 aa).

An OCIA domain is found at 1–120; the sequence is MASVSTHGNQ…HSFEDQLRGA (120 aa). The residue at position 41 (lysine 41) is an N6-acetyllysine.

Interacts (via OCIA domain) with OCIAD1/ASRIJ and STAT3. In terms of tissue distribution, abundant in kidney, liver and brain.

Its subcellular location is the endosome. It localises to the mitochondrion. The protein localises to the mitochondrion inner membrane. In terms of biological role, has an essential role in the assembly of mitochondrial respiratory chain complex III. Is also required for STAT3 activation and plays a role in cell migration. In Mus musculus (Mouse), this protein is OCIA domain-containing protein 2 (Ociad2).